We begin with the raw amino-acid sequence, 119 residues long: C-C motif chemokine 24 (119 aa).

Residues 1–26 (MAGLMTIVTSLLFLGVCAHHIIPTGS) form the signal peptide. 2 disulfides stabilise this stretch: Cys33-Cys58 and Cys34-Cys74. A glycan (N-linked (GlcNAc...) asparagine) is linked at Asn115.

It belongs to the intercrine beta (chemokine CC) family. In terms of processing, N-glycosylated. Activated monocytes and activated T lymphocytes.

Its subcellular location is the secreted. Functionally, chemotactic for resting T-lymphocytes, and eosinophils. Has lower chemotactic activity for neutrophils but none for monocytes and activated lymphocytes. Is a strong suppressor of colony formation by a multipotential hematopoietic progenitor cell line. Binds to CCR3. This Homo sapiens (Human) protein is C-C motif chemokine 24.